The chain runs to 428 residues: Hemagglutinin-esterase (428 aa).

A signal peptide spans 1-19 (MCIAMAPRTLLLLIXCQLV). Positions 9-129 (TLLLLIXCQL…DNKRWMGNKA (121 aa)) are esterase domain 1. Over 20 to 404 (FGFNEPLNIV…PVCIYDPLPV (385 aa)) the chain is Virion surface. The Nucleophile role is filled by Ser-42. A disulfide bond links Cys-46 and Cys-67. N-linked (GlcNAc...) asparagine; by host glycans are attached at residues Asn-91, Asn-149, Asn-193, Asn-243, and Asn-313. Cys-115 and Cys-164 form a disulfide bridge. The segment at 130 to 278 (RFYARVYEKM…GNYKAVSLEY (149 aa)) is receptor binding. 2 cysteine pairs are disulfide-bonded: Cys-199–Cys-288 and Cys-207–Cys-261. Positions 279–392 (LLSLPSKAIC…HCPTAANIGY (114 aa)) are esterase domain 2. The cysteines at positions 319 and 324 are disulfide-linked. Asn-328 and Asn-332 each carry an N-linked (GlcNAc...) asparagine; by host glycan. Active-site charge relay system residues include Asp-339 and His-342. Asn-357 and Asn-371 each carry an N-linked (GlcNAc...) asparagine; by host glycan. Cys-360 and Cys-384 form a disulfide bridge. Residues 405–425 (ILLGVLLGIAVLIIVFLNVLF) traverse the membrane as a helical segment. At 426 to 428 (YDG) the chain is on the intravirion side.

Belongs to the influenza type C/coronaviruses hemagglutinin-esterase family. As to quaternary structure, homodimer; disulfide-linked. Forms a complex with the M protein in the pre-Golgi. Associates then with S-M complex to form a ternary complex S-M-HE. In terms of processing, N-glycosylated in the RER. Post-translationally, N-glycosylated in the host RER.

It localises to the virion membrane. The protein resides in the host cell membrane. It catalyses the reaction N-acetyl-9-O-acetylneuraminate + H2O = N-acetylneuraminate + acetate + H(+). The enzyme catalyses N-acetyl-4-O-acetylneuraminate + H2O = N-acetylneuraminate + acetate + H(+). Structural protein that makes short spikes at the surface of the virus. Contains receptor binding and receptor-destroying activities. Mediates de-O-acetylation of N-acetyl-4-O-acetylneuraminic acid, which is probably the receptor determinant recognized by the virus on the surface of erythrocytes and susceptible cells. This receptor-destroying activity is important for virus release as it probably helps preventing self-aggregation and ensures the efficient spread of the progeny virus from cell to cell. May serve as a secondary viral attachment protein for initiating infection, the spike protein being the major one. May become a target for both the humoral and the cellular branches of the immune system. This chain is Hemagglutinin-esterase, found in Mus musculus (Mouse).